The chain runs to 471 residues: Protein translocase subunit SecF (471 aa).

The disordered stretch occupies residues 1-29 (MVSRAKVGAETTKGIDEPDRNDNTDDNGA). Positions 13–23 (KGIDEPDRNDN) are enriched in basic and acidic residues. Transmembrane regions (helical) follow at residues 88-108 (GGVIVAVAVLSIIVRGFTFGI), 211-231 (ITKKVVIALVVFLVLVGLYIT), 242-262 (ALTTMCFDLTVTAGVYSLVGF), 267-287 (ATVIGLLTILGFSLYDTVIVF), 325-345 (LISVLPVLALMVVAVWLLGVG), and 355-375 (LVGIIVGTYSSIFFATPLLVT). The disordered stretch occupies residues 393–471 (RRTLGSQVGK…TGKRNNVGRR (79 aa)). Over residues 415–431 (KPQNQAESCADASSQEG) the composition is skewed to polar residues. The segment covering 448–460 (PGVRPVRPTGTRR) has biased composition (low complexity). The segment covering 461-471 (PTGKRNNVGRR) has biased composition (basic residues).

This sequence belongs to the SecD/SecF family. SecF subfamily. As to quaternary structure, forms a complex with SecD. Part of the essential Sec protein translocation apparatus which comprises SecA, SecYEG and auxiliary proteins SecDF. Other proteins may also be involved.

Its subcellular location is the cell membrane. Part of the Sec protein translocase complex. Interacts with the SecYEG preprotein conducting channel. SecDF uses the proton motive force (PMF) to complete protein translocation after the ATP-dependent function of SecA. In Mycobacterium leprae (strain TN), this protein is Protein translocase subunit SecF.